The following is a 529-amino-acid chain: Bifunctional purine biosynthesis protein PurH (529 aa).

Positions 1–148 (MQQRRSVRRA…KNHKDVAIVV (148 aa)) constitute an MGS-like domain.

It belongs to the PurH family.

The enzyme catalyses (6R)-10-formyltetrahydrofolate + 5-amino-1-(5-phospho-beta-D-ribosyl)imidazole-4-carboxamide = 5-formamido-1-(5-phospho-D-ribosyl)imidazole-4-carboxamide + (6S)-5,6,7,8-tetrahydrofolate. It catalyses the reaction IMP + H2O = 5-formamido-1-(5-phospho-D-ribosyl)imidazole-4-carboxamide. The protein operates within purine metabolism; IMP biosynthesis via de novo pathway; 5-formamido-1-(5-phospho-D-ribosyl)imidazole-4-carboxamide from 5-amino-1-(5-phospho-D-ribosyl)imidazole-4-carboxamide (10-formyl THF route): step 1/1. It functions in the pathway purine metabolism; IMP biosynthesis via de novo pathway; IMP from 5-formamido-1-(5-phospho-D-ribosyl)imidazole-4-carboxamide: step 1/1. The polypeptide is Bifunctional purine biosynthesis protein PurH (Salmonella arizonae (strain ATCC BAA-731 / CDC346-86 / RSK2980)).